Reading from the N-terminus, the 68-residue chain is Protein transport protein Sec61 subunit gamma (68 aa).

At 1 to 32 the chain is on the cytoplasmic side; sequence MDQFQALIEPARQFSKDSYRLVKRCTKPDRKE. Residues 33–61 traverse the membrane as a helical segment; it reads YQKIAMATAIGFAIMGFIGFFVKLIHIPI. At 62-68 the chain is on the extracellular side; it reads NNIIVGA.

Belongs to the SecE/SEC61-gamma family. Heterotrimeric complex composed of SEC61-alpha, SEC61-beta and SEC61-gamma. As to expression, expressed in the germline. Expression in the germline is regulated in a sex- and meiotic cycle stage-specific manner. Expressed in somatic tissues including the intestine and somatic gonad. Expressed in the intestine more highly in hermaprodites than in males. In hermaphrodites, weakly expressed in the spermatheca.

It localises to the endoplasmic reticulum membrane. Functionally, required for oocyte development and ovulation. Required for the translocation of secretory and transmembrane proteins into the endoplasmic reticulum in vitro. The polypeptide is Protein transport protein Sec61 subunit gamma (Caenorhabditis elegans).